A 106-amino-acid chain; its full sequence is Iron-sulfur cluster assembly protein CyaY (106 aa).

It belongs to the frataxin family.

Its function is as follows. Involved in iron-sulfur (Fe-S) cluster assembly. May act as a regulator of Fe-S biogenesis. The sequence is that of Iron-sulfur cluster assembly protein CyaY from Salmonella schwarzengrund (strain CVM19633).